The chain runs to 247 residues: tRNA pseudouridine synthase A (247 aa).

The active-site Nucleophile is the aspartate 53. Residue tyrosine 111 coordinates substrate.

It belongs to the tRNA pseudouridine synthase TruA family. In terms of assembly, homodimer.

It carries out the reaction uridine(38/39/40) in tRNA = pseudouridine(38/39/40) in tRNA. In terms of biological role, formation of pseudouridine at positions 38, 39 and 40 in the anticodon stem and loop of transfer RNAs. This chain is tRNA pseudouridine synthase A, found in Bacillus subtilis (strain 168).